A 166-amino-acid polypeptide reads, in one-letter code: Peptide deformylase (166 aa).

Residues C88 and H130 each coordinate Fe cation. E131 is an active-site residue. Residue H134 participates in Fe cation binding.

It belongs to the polypeptide deformylase family. Requires Fe(2+) as cofactor.

The enzyme catalyses N-terminal N-formyl-L-methionyl-[peptide] + H2O = N-terminal L-methionyl-[peptide] + formate. Removes the formyl group from the N-terminal Met of newly synthesized proteins. Requires at least a dipeptide for an efficient rate of reaction. N-terminal L-methionine is a prerequisite for activity but the enzyme has broad specificity at other positions. In Thermoanaerobacter sp. (strain X514), this protein is Peptide deformylase.